Here is a 303-residue protein sequence, read N- to C-terminus: tRNA pseudouridine synthase B (303 aa).

Asp-47 serves as the catalytic Nucleophile.

This sequence belongs to the pseudouridine synthase TruB family. Type 1 subfamily.

It catalyses the reaction uridine(55) in tRNA = pseudouridine(55) in tRNA. Responsible for synthesis of pseudouridine from uracil-55 in the psi GC loop of transfer RNAs. In Legionella pneumophila (strain Lens), this protein is tRNA pseudouridine synthase B.